Consider the following 267-residue polypeptide: MRLALRIAYDGTAFYGFQRQPGLRTVEGEIIRALTKLGIIEDVESSNFKGASRTDRGVSAFFNVVAFDVASRPDLVRPEVLNFHLKDVWVLGTAEVPEDFHPRFWAKSKTYRYYLIDAGFDEKAMRECAKLFIGTHDFSAFARLEPHKNPVRELIRADIIKRQGYYIIELEGKSFLWEMARRIVNALRFCGLGILTEEEVEKMLNGEYSRKIPPARPEGLVLWGIEYEGIEFRGNEKGIRKAKHDLFERYSEALTRAALFGDLLLGL.

D55 serves as the catalytic Nucleophile. A substrate-binding site is contributed by Y111.

The protein belongs to the tRNA pseudouridine synthase TruA family.

The enzyme catalyses uridine(38/39/40) in tRNA = pseudouridine(38/39/40) in tRNA. Its function is as follows. Formation of pseudouridine at positions 38, 39 and 40 in the anticodon stem and loop of transfer RNAs. The polypeptide is tRNA pseudouridine synthase A (Thermococcus onnurineus (strain NA1)).